The primary structure comprises 425 residues: Probable sucrose-phosphatase 3a (425 aa).

The protein belongs to the sucrose phosphatase family. In terms of assembly, homodimer. Requires Mg(2+) as cofactor.

It carries out the reaction sucrose 6(F)-phosphate + H2O = sucrose + phosphate. It participates in glycan biosynthesis; sucrose biosynthesis; sucrose from D-fructose 6-phosphate and UDP-alpha-D-glucose: step 2/2. In terms of biological role, catalyzes the final step of sucrose synthesis. This Arabidopsis thaliana (Mouse-ear cress) protein is Probable sucrose-phosphatase 3a (SPP3A).